A 309-amino-acid polypeptide reads, in one-letter code: Non-homologous end-joining factor 1 (309 aa).

The segment at 1 to 134 (MEAVLSALPW…TPVAVVCRQL (134 aa)) is globular head. The segment at 223–298 (GKTGRKRKHS…AGSEDRSTSR (76 aa)) is C-terminal tail. The interval 223 to 309 (GKTGRKRKHS…KKKKAVGLFR (87 aa)) is disordered. Basic and acidic residues predominate over residues 243–252 (HITDHQHISE). 2 stretches are compositionally biased toward polar residues: residues 253-265 (STDV…SQEH) and 273-290 (RSQV…STAG). The segment covering 297–309 (SRAKKKKAVGLFR) has biased composition (basic residues). The short motif at 299 to 309 (AKKKKAVGLFR) is the XLM element.

This sequence belongs to the XRCC4-XLF family. XLF subfamily. Homodimer. Interacts with xrcc4; the interaction is direct and is mediated via a head-to-head interaction between N-terminal head regions. Component of the core long-range non-homologous end joining (NHEJ) complex (also named DNA-PK complex) composed of prkdc/DNA-PKcs, lig4, xrcc4, xrcc6/Ku70, xrcc5/Ku80 and nhej1/xlf.

It is found in the nucleus. The protein localises to the chromosome. Its function is as follows. DNA repair protein involved in DNA non-homologous end joining (NHEJ); it is required for double-strand break (DSB) repair and V(D)J recombination and is also involved in telomere maintenance. Plays a key role in NHEJ by promoting the ligation of various mismatched and non-cohesive ends. In some studies, has been shown to associate with xrcc4 to form alternating helical filaments that bridge DNA and act like a bandage, holding together the broken DNA until it is repaired. Alternatively, it has also been shown that rather than forming filaments, a single nhej1 dimer interacts through both head domains with xrcc4 to promote the close alignment of DNA ends. The xrcc4-nhej1/xlf subcomplex binds to the DNA fragments of a DSB in a highly diffusive manner and robustly bridges two independent DNA molecules, holding the broken DNA fragments in close proximity to one other. The mobility of the bridges ensures that the ends remain accessible for further processing by other repair factors. This Danio rerio (Zebrafish) protein is Non-homologous end-joining factor 1 (nhej1).